Here is a 358-residue protein sequence, read N- to C-terminus: Flap endonuclease 1 (358 aa).

Positions 1–103 (MGIKRLSKLI…HEFEKRTKRR (103 aa)) are N-domain. Residue Asp34 coordinates Mg(2+). 2 residues coordinate DNA: Arg47 and Arg69. Positions 85, 157, 159, 178, and 180 each coordinate Mg(2+). Residues 121 to 252 (LVSKYDRMNV…KRAFEYIKKY (132 aa)) form an I-domain region. Glu157 provides a ligand contact to DNA. Positions 230 and 232 each coordinate DNA. Residue Asp232 coordinates Mg(2+). An interaction with PCNA region spans residues 346–354 (KQTRIDSFF).

This sequence belongs to the XPG/RAD2 endonuclease family. FEN1 subfamily. In terms of assembly, interacts with PCNA. Three molecules of FEN1 bind to one PCNA trimer with each molecule binding to one PCNA monomer. PCNA stimulates the nuclease activity without altering cleavage specificity. It depends on Mg(2+) as a cofactor. Post-translationally, phosphorylated. Phosphorylation upon DNA damage induces relocalization to the nuclear plasma.

The protein resides in the nucleus. Its subcellular location is the nucleolus. The protein localises to the nucleoplasm. It localises to the mitochondrion. Functionally, structure-specific nuclease with 5'-flap endonuclease and 5'-3' exonuclease activities involved in DNA replication and repair. During DNA replication, cleaves the 5'-overhanging flap structure that is generated by displacement synthesis when DNA polymerase encounters the 5'-end of a downstream Okazaki fragment. It enters the flap from the 5'-end and then tracks to cleave the flap base, leaving a nick for ligation. Also involved in the long patch base excision repair (LP-BER) pathway, by cleaving within the apurinic/apyrimidinic (AP) site-terminated flap. Acts as a genome stabilization factor that prevents flaps from equilibrating into structures that lead to duplications and deletions. Also possesses 5'-3' exonuclease activity on nicked or gapped double-stranded DNA, and exhibits RNase H activity. Also involved in replication and repair of rDNA and in repairing mitochondrial DNA. The polypeptide is Flap endonuclease 1 (Enterocytozoon bieneusi (strain H348) (Microsporidian parasite)).